The following is a 47-amino-acid chain: MSTDNFEKIKGRPTQKEEWQLKEWEKEKDENNRLFQEQKQKTTNRKG.

Disordered stretches follow at residues 1–20 (MSTDNFEKIKGRPTQKEEWQ) and 25–47 (EKEKDENNRLFQEQKQKTTNRKG). Residues 25 to 40 (EKEKDENNRLFQEQKQ) show a composition bias toward basic and acidic residues.

This is an uncharacterized protein from Dictyostelium discoideum (Social amoeba).